The chain runs to 82 residues: MSFNPELATKTLEAEGLRCPEPVMMVRKTIRNMQDGEVLLVKADDPSTTRDIPSFCRFMDHQLIAAQTDQLPYQYLIKKGLE.

Catalysis depends on cysteine 19, which acts as the Cysteine persulfide intermediate.

Belongs to the sulfur carrier protein TusA family.

Its subcellular location is the cytoplasm. In terms of biological role, sulfur carrier protein which probably makes part of a sulfur-relay system. This Vibrio campbellii (strain ATCC BAA-1116) protein is Sulfur carrier protein TusA.